The chain runs to 147 residues: Transthyretin (147 aa).

The signal sequence occupies residues 1–20 (MASRRLLLLCLAGLVLVTEA). Cysteine 30 carries the sulfocysteine modification. Residue lysine 35 coordinates L-thyroxine. Glutamate 62 carries the 4-carboxyglutamate modification. L-thyroxine is bound at residue glutamate 74. An N-linked (GlcNAc...) asparagine glycan is attached at asparagine 118. Serine 137 is a binding site for L-thyroxine.

Belongs to the transthyretin family. Homotetramer. Dimer of dimers. In the homotetramer, subunits assemble around a central channel that can accommodate two ligand molecules. Interacts with RBP4. Sulfonation of the reactive cysteine Cys-30 enhances the stability of the native conformation of TTR, avoiding misassembly of the protein leading to amyloid formation. Detected in serum (at protein level). Detected in liver.

Its subcellular location is the secreted. Functionally, thyroid hormone-binding protein. Probably transports thyroxine from the bloodstream to the brain. The sequence is that of Transthyretin (TTR) from Sorex araneus (Eurasian common shrew).